The following is a 939-amino-acid chain: AP-2 complex subunit alpha-2 (939 aa).

A 1,2-diacyl-sn-glycero-3-phospho-(1D-myo-inositol-3,4,5-trisphosphate)-binding positions include 11–12 (RG), Lys-43, Tyr-53, and 57–61 (KYVCK). The disordered stretch occupies residues 612-681 (LAKLKKKKGP…AGPPPSSGGS (70 aa)). A compositionally biased stretch (low complexity) spans 646-667 (PASTSAVSTPSPSADLLGLGAA). Pro residues predominate over residues 668–677 (PPAPAGPPPS).

It belongs to the adaptor complexes large subunit family. Adaptor protein complex 2 (AP-2) is a heterotetramer composed of two large adaptins (alpha-type subunit AP2A1 or AP2A2 and beta-type subunit AP2B1), a medium adaptin (mu-type subunit AP2M1) and a small adaptin (sigma-type subunit AP2S1). Binds EPN1, EPS15, AMPH, SNAP91 and BIN1. Interacts with HIP1. Interacts with DGKD. Interacts with DENND1A, DENND1B and DENND1C. Interacts with FCHO1 and DAB2. Interacts with ATAT1; this interaction is required for efficient alpha-tubulin acetylation by ATAT1. Interacts with KIAA1107. Together with AP2B1 and AP2M1, it interacts with ADAM10; this interaction facilitates ADAM10 endocytosis from the plasma membrane during long-term potentiation in hippocampal neurons. Interacts with CLN3 (via dileucine motif). Interacts with ABCB11; this interaction regulates cell membrane expression of ABCB11 through its internalization in a clathrin-dependent manner and its subsequent degradation. Interacts with Cacfd1. Interacts with DNAJC6. Expressed in the brain (at protein level).

The protein localises to the cell membrane. The protein resides in the membrane. Its subcellular location is the coated pit. Component of the adaptor protein complex 2 (AP-2). Adaptor protein complexes function in protein transport via transport vesicles in different membrane traffic pathways. Adaptor protein complexes are vesicle coat components and appear to be involved in cargo selection and vesicle formation. AP-2 is involved in clathrin-dependent endocytosis in which cargo proteins are incorporated into vesicles surrounded by clathrin (clathrin-coated vesicles, CCVs) which are destined for fusion with the early endosome. The clathrin lattice serves as a mechanical scaffold but is itself unable to bind directly to membrane components. Clathrin-associated adaptor protein (AP) complexes which can bind directly to both the clathrin lattice and to the lipid and protein components of membranes are considered to be the major clathrin adaptors contributing the CCV formation. AP-2 also serves as a cargo receptor to selectively sort the membrane proteins involved in receptor-mediated endocytosis. AP-2 seems to play a role in the recycling of synaptic vesicle membranes from the presynaptic surface. AP-2 recognizes Y-X-X-[FILMV] (Y-X-X-Phi) and [ED]-X-X-X-L-[LI] endocytosis signal motifs within the cytosolic tails of transmembrane cargo molecules. AP-2 may also play a role in maintaining normal post-endocytic trafficking through the ARF6-regulated, non-clathrin pathway. During long-term potentiation in hippocampal neurons, AP-2 is responsible for the endocytosis of ADAM10. The AP-2 alpha subunit binds polyphosphoinositide-containing lipids, positioning AP-2 on the membrane. The AP-2 alpha subunit acts via its C-terminal appendage domain as a scaffolding platform for endocytic accessory proteins. The AP-2 alpha and AP-2 sigma subunits are thought to contribute to the recognition of the [ED]-X-X-X-L-[LI] motif. The chain is AP-2 complex subunit alpha-2 (AP2A2) from Homo sapiens (Human).